A 245-amino-acid polypeptide reads, in one-letter code: Myozenin-3 (245 aa).

S31 carries the phosphoserine modification. The tract at residues 50 to 67 (LLFQKRQRRVQKFTFELS) is binding to ACTN2, PPP3CA and TCAP. The binding to FLNC stretch occupies residues 67-108 (SESLQAILASSARGKVAGRAAQATVPNGLEEQNHHSETHVFQ). A disordered region spans residues 93–134 (NGLEEQNHHSETHVFQGSPGDPGITHLGAAGTGSVRSPSALA). Residues 180–201 (PIPRDYRNFNKTPVPFGGPHVR) are binding to ACTN2.

It belongs to the myozenin family. Interacts with ACTN2, LDB3, FLNC, PPP3CA and TCAP. In terms of tissue distribution, expressed specifically in skeletal muscle and is enriched in fast-twitch muscle fibers. Not detected in heart.

It is found in the cytoplasm. The protein resides in the myofibril. The protein localises to the sarcomere. It localises to the z line. Functionally, myozenins may serve as intracellular binding proteins involved in linking Z line proteins such as alpha-actinin, gamma-filamin, TCAP/telethonin, LDB3/ZASP and localizing calcineurin signaling to the sarcomere. Plays an important role in the modulation of calcineurin signaling. May play a role in myofibrillogenesis. The polypeptide is Myozenin-3 (Mus musculus (Mouse)).